Reading from the N-terminus, the 240-residue chain is Phosphoenolpyruvate guanylyltransferase (240 aa).

T161, G178, and S181 together coordinate phosphoenolpyruvate.

Belongs to the CofC family.

It catalyses the reaction phosphoenolpyruvate + GTP + H(+) = enolpyruvoyl-2-diphospho-5'-guanosine + diphosphate. It participates in cofactor biosynthesis; coenzyme F420 biosynthesis. Functionally, guanylyltransferase that catalyzes the activation of phosphoenolpyruvate (PEP) as enolpyruvoyl-2-diphospho-5'-guanosine, via the condensation of PEP with GTP. It is involved in the biosynthesis of coenzyme F420, a hydride carrier cofactor. This chain is Phosphoenolpyruvate guanylyltransferase, found in Rhodococcus opacus (strain B4).